Reading from the N-terminus, the 1630-residue chain is MKIIFFLCSFLFFIINTQCVTHESYQELVKKLEALEDAVLTGYSLFHKEKMILNEEEITTKGASAQSGTSGTSGTSGPSGPSGTSPSSRSNTLPRSNTSSGASPPADASDSDAKSYADLKHRVRNYLLTIKELKYPQLFDLTNHMLTLCDNIHGFKYLIDGYEEINELLYKLNFYFDLLRAKLNDVCANDYCQIPFNLKIRANELDVLKKLVFGYRKPLDNIKDNVGKMEDYIKKNKKTIENINELIEESKKTIDKNKNATKEEEKKKLYQAQYDLSIYNKQLEEAHNLISVLEKRIDTLKKNENIKELLDKINEIKNPPPANSGNTPNTLLDKNKKIEEHEKEIKEIAKTIKFNIDSLFTDPLELEYYLREKNKNIDISAKVETKESTEPNEYPNGVTYPLSYNDINNALNELNSFGDLINPFDYTKEPSKNIYTDNERKKFINEIKEKIKIEKKKIESDKKSYEDRSKSLNDITKEYEKLLNEIYDSKFNNNIDLTNFEKMMGKRYSYKVEKLTHHNTFASYENSKHNLEKLTKALKYMEDYSLRNIVVEKELKYYKNLISKIENEIETLVENIKKDEEQLFEKKITKDENKPDEKILEVSDIVKVQVQKVLLMNKIDELKKTQLILKNVELKHNIHVPNSYKQENKQEPYYLIVLKKEIDKLKVFMPKVESLINEEKKNIKTEGQSDNSEPSTEGEITGQATTKPGQQAGSALEGDSVQAQAQEQKQAQPPVPVPVPEAKAQVPTPPAPVNNKTENVSKLDYLEKLYEFLNTSYICHKYILVSHSTMNEKILKQYKITKEEESKLSSCDPLDLLFNIQNNIPVMYSMFDSLNNSLSQLFMEIYEKEMVCNLYKLKDNDKIKNLLEEAKKVSTSVKTLSSSSMQPLSLTPQDKPEVSANDDTSHSTNLNNSLKLFENILSLGKNKNIYQELIGQKSSENFYEKILKDSDTFYNESFTNFVKSKADDINSLNDESKRKKLEEDINKLKKTLQLSFDLYNKYKLKLERLFDKKKTVGKYKMQIKKLTLLKEQLESKLNSLNNPKHVLQNFSVFFNKKKEAEIAETENTLENTKILLKHYKGLVKYYNGESSPLKTLSEESIQTEDNYASLENFKVLSKLEGKLKDNLNLEKKKLSYLSSGLHHLIAELKEVIKNKNYTGNSPSENNTDVNNALESYKKFLPEGTDVATVVSESGSDTLEQSQPKKPASTHVGAESNTITTSQNVDDEVDDVIIVPIFGESEEDYDDLGQVVTGEAVTPSVIDNILSKIENEYEVLYLKPLAGVYRSLKKQLENNVMTFNVNVKDILNSRFNKRENFKNVLESDLIPYKDLTSSNYVVKDPYKFLNKEKRDKFLSSYNYIKDSIDTDINFANDVLGYYKILSEKYKSDLDSIKKYINDKQGENEKYLPFLNNIETLYKTVNDKIDLFVIHLEAKVLNYTYEKSNVEVKIKELNYLKTIQDKLADFKKNNNFVGIADLSTDYNHNNLLTKFLSTGMVFENLAKTVLSNLLDGNLQGMLNISQHQCVKKQCPQNSGCFRHLDEREECKCLLNYKQEGDKCVENPNPTCNENNGGCDADAKCTEEDSGSNGKKITCECTKPDSYPLFDGIFCSSSNFLGISFLLILMLILYSFI.

Positions 1–19 (MKIIFFLCSFLFFIINTQC) are cleaved as a signal peptide. The interval 60-113 (TKGASAQSGTSGTSGTSGPSGPSGTSPSSRSNTLPRSNTSSGASPPADASDSDA) is disordered. The tripeptide SG(TP) repeat stretch occupies residues 67–84 (SGTSGTSGTSGPSGPSGT). Residues 67-88 (SGTSGTSGTSGPSGPSGTSPSS) are compositionally biased toward low complexity. Positions 89 to 98 (RSNTLPRSNT) are enriched in polar residues. N97 is a glycosylation site (N-linked (GlcNAc...) asparagine). Positions 99–108 (SSGASPPADA) are enriched in low complexity. N259 carries an N-linked (GlcNAc...) asparagine glycan. Residues 680 to 755 (KKNIKTEGQS…VPTPPAPVNN (76 aa)) form a disordered region. Composition is skewed to polar residues over residues 685-695 (TEGQSDNSEPS) and 702-713 (GQATTKPGQQAG). The segment covering 721 to 732 (VQAQAQEQKQAQ) has biased composition (low complexity). N755, N759, N774, and N835 each carry an N-linked (GlcNAc...) asparagine glycan. A disordered region spans residues 884–906 (SMQPLSLTPQDKPEVSANDDTSH). N911, N955, N1049, N1156, and N1165 each carry an N-linked (GlcNAc...) asparagine glycan. A required for binding to host erythrocyte cell membrane region spans residues 993-1107 (QLSFDLYNKY…EESIQTEDNY (115 aa)). Residues 1190–1203 (VSESGSDTLEQSQP) are compositionally biased toward polar residues. Residues 1190–1220 (VSESGSDTLEQSQPKKPASTHVGAESNTITT) are disordered. N1436 and N1517 each carry an N-linked (GlcNAc...) asparagine glycan. EGF-like domains are found at residues 1521 to 1561 (HQCV…VENP) and 1562 to 1610 (NPTC…FCSS). 6 disulfides stabilise this stretch: C1523/C1534, C1528/C1544, C1546/C1557, C1565/C1578, C1572/C1592, and C1594/C1608. The GPI-anchor amidated serine moiety is linked to residue S1609. The propeptide at 1610-1630 (SSNFLGISFLLILMLILYSFI) is removed in mature form.

Forms a complex composed of subunits p83, p30, p38, and p42 which remain non-covalently associated; the complex is formed at the merozoite surface prior to egress from host erythrocytes. Forms a complex composed of processed MSP1 subunits, MSP6 subunit p36 and MSP7; the complex is formed at the merozoite surface prior to egress from host erythrocytes. Within the complex, interacts (via subunit p38) with MSP6 subunit p36 and (via subunits p83, p30 and p38) with MSP7 (via subunit p22). Forms a complex composed of MSP1, MSP6, DBLMSP1 and DBLMSP2. Within the complex, interacts (via subunit p38) with DBLMSP1 and DBLMSP2. Forms a complex composed of MSP1, and rhoptry proteins RhopH3, RAP1 and CLAG9/RhopH3. Within the complex, interacts (via subunits p42 and p19) with RhopH3 (via C-terminus). Forms a complex composed of MSP1, MSP6, MSP7, MSP9 and MSP3; within the complex, MSP6 and MSP9 mediate the binding to the host erythrocyte. Interacts (via subunits p19 and p42) with MSP9; the interaction is direct; MSP1 subunits p19 or p42, and MSP9 form a co-ligand complex that interacts with host SLC4A1/Band 3 protein. May interact with PFD6. Interacts with host spectrin. In terms of assembly, interacts with host glycophorin GYPA in a sialic acid-independent manner. As to quaternary structure, interacts with host proinflammatory cytokine S100P; the interaction blocks S100P inflammatory and chemotactic activities. Interacts with host SLC4A1/Band 3 (via 5ABC region) on the host erythrocyte surface in a sialic acid-independent manner. Post-translationally, the p190 precursor is cleaved by SUB1 prior to merozoite egress into 4 subunits p83, p30, p38, and p42 which remain non-covalently associated. SUB1-mediated proteolytic cleavage occurs in an orderly manner; the first cleavage occurs at the p83/p30 site, followed by cleavage at the p30/p38 site, the last cleavage occurs at the p38/p42 site. The order of cleavage is essential for parasite viability. SUB1-mediated processing is essential for merozoite egress. In a second processing step during erythrocyte invasion, p42 is cleaved by SUB2 into p33 and p19; the latter remains attached to the merozoite surface via its GPI-anchor and stays on the surface during the subsequent ring stage.

The protein localises to the cell membrane. Its subcellular location is the secreted. It localises to the vacuole membrane. Functionally, during the asexual blood stage, involved in merozoite egress from host erythrocytes possibly via its interaction with the host cytoskeleton protein spectrin resulting in the destabilization of the host cytoskeleton and thus leading to erythrocyte cell membrane rupture. Involved in the binding to host erythrocytes and is required for host erythrocyte invasion. In terms of biological role, by binding to host proinflammatory cytokine S100P may interfere with host immune responses. Its function is as follows. Involved in merozoite invasion of host erythrocytes. May play a role in the biogenesis and/or function of the food vacuole during the intraerythrocytic development. The protein is Merozoite surface protein 1 of Plasmodium falciparum (isolate K1 / Thailand).